Reading from the N-terminus, the 433-residue chain is C2H2 type master regulator of conidiophore development brlA (433 aa).

Disordered stretches follow at residues S24–Q49, K240–H269, and M286–N306. Over residues T30–Q49 the composition is skewed to low complexity. The segment covering K240 to S264 has biased composition (polar residues). Over residues Q288–L302 the composition is skewed to basic residues. 2 consecutive C2H2-type zinc fingers follow at residues F321–H345 and H351–H376. A disordered region spans residues E391 to C423.

The protein localises to the nucleus. In terms of biological role, brlA, abaA and wetA are pivotal regulators of conidiophore development and conidium maturation. They act individually and together to regulate their own expression and that of numerous other sporulation-specific genes. Binds promoters of target genes at brlA response elements (BREs) containing the conserved sequence 5'-(C/A)(A/G)AGGG(G/A)-3'. Regulates genes involved in conidiogenesis. This is C2H2 type master regulator of conidiophore development brlA from Penicillium digitatum (strain PHI26 / CECT 20796) (Green mold).